Here is a 660-residue protein sequence, read N- to C-terminus: Pentatricopeptide repeat-containing protein At4g20090 (660 aa).

15 PPR repeats span residues 76–110, 111–141, 147–181, 186–220, 221–255, 256–290, 291–325, 326–360, 361–395, 396–430, 431–465, 466–500, 501–535, 539–573, and 574–609; these read GDST…NRVI, IERS…MVDE, SVKS…NMNM, NGLS…KCLP, DGYT…GCSP, SPVI…GCVP, NEVT…KCIP, NDVT…GYHL, NQHI…GCKP, NIVV…GCLP, NAYT…GCSR, NKFC…GIKP, DTVA…EEPK, DVVT…GCDP, and DVIT…LLKR.

Belongs to the PPR family. P subfamily.

In terms of biological role, may play a role in embryogenesis. The protein is Pentatricopeptide repeat-containing protein At4g20090 (EMB1025) of Arabidopsis thaliana (Mouse-ear cress).